We begin with the raw amino-acid sequence, 238 residues long: Aspartate/glutamate leucyltransferase (238 aa).

The protein belongs to the R-transferase family. Bpt subfamily.

Its subcellular location is the cytoplasm. It carries out the reaction N-terminal L-glutamyl-[protein] + L-leucyl-tRNA(Leu) = N-terminal L-leucyl-L-glutamyl-[protein] + tRNA(Leu) + H(+). It catalyses the reaction N-terminal L-aspartyl-[protein] + L-leucyl-tRNA(Leu) = N-terminal L-leucyl-L-aspartyl-[protein] + tRNA(Leu) + H(+). In terms of biological role, functions in the N-end rule pathway of protein degradation where it conjugates Leu from its aminoacyl-tRNA to the N-termini of proteins containing an N-terminal aspartate or glutamate. The polypeptide is Aspartate/glutamate leucyltransferase (Nitrosococcus oceani (strain ATCC 19707 / BCRC 17464 / JCM 30415 / NCIMB 11848 / C-107)).